A 291-amino-acid polypeptide reads, in one-letter code: Ribonuclease Z (291 aa).

His61, His63, Asp65, His66, His133, Asp201, and His257 together coordinate Zn(2+). Asp65 acts as the Proton acceptor in catalysis.

The protein belongs to the RNase Z family. As to quaternary structure, homodimer. It depends on Zn(2+) as a cofactor.

The catalysed reaction is Endonucleolytic cleavage of RNA, removing extra 3' nucleotides from tRNA precursor, generating 3' termini of tRNAs. A 3'-hydroxy group is left at the tRNA terminus and a 5'-phosphoryl group is left at the trailer molecule.. In terms of biological role, zinc phosphodiesterase, which displays some tRNA 3'-processing endonuclease activity. Probably involved in tRNA maturation, by removing a 3'-trailer from precursor tRNA. The chain is Ribonuclease Z from Saccharolobus islandicus (strain L.S.2.15 / Lassen #1) (Sulfolobus islandicus).